The following is a 260-amino-acid chain: Global transcriptional regulator CodY (260 aa).

The GAF domain stretch occupies residues 1–159 (MPNLLEKTRK…SSTVVGIQLL (159 aa)). A DNA-binding region (H-T-H motif) is located at residues 207-226 (ASVIADRIGITRSVIVNALR).

This sequence belongs to the CodY family.

The protein localises to the cytoplasm. Its function is as follows. DNA-binding global transcriptional regulator which is involved in the adaptive response to starvation and acts by directly or indirectly controlling the expression of numerous genes in response to nutrient availability. During rapid exponential growth, CodY is highly active and represses genes whose products allow adaptation to nutrient depletion. This Streptococcus equi subsp. zooepidemicus (strain H70) protein is Global transcriptional regulator CodY.